A 317-amino-acid chain; its full sequence is Transcriptional activator protein med (317 aa).

An N-terminal signal peptide occupies residues methionine 1–glycine 17. Cysteine 18 carries the N-palmitoyl cysteine lipid modification. Cysteine 18 carries the S-diacylglycerol cysteine lipid modification.

It belongs to the BMP lipoprotein family.

Its subcellular location is the cell membrane. Functionally, positive activator of the comK gene. The protein is Transcriptional activator protein med (med) of Bacillus subtilis (strain 168).